The following is a 265-amino-acid chain: 2-amino-3,7-dideoxy-D-threo-hept-6-ulosonate synthase (265 aa).

D25 acts as the Proton acceptor in catalysis. 1-deoxy-D-threo-hexo-2,5-diulose 6-phosphate-binding positions include 25 to 29 (DHGIT) and 144 to 146 (YAR). The Proton donor role is filled by Y144. Residue K174 is the Schiff-base intermediate with substrate of the active site. Residues 199 to 200 (GG) and 226 to 227 (GR) contribute to the 1-deoxy-D-threo-hexo-2,5-diulose 6-phosphate site.

Belongs to the DeoC/FbaB aldolase family. ADHS subfamily. In terms of assembly, homodecamer.

It catalyses the reaction 1-deoxy-D-threo-hexo-2,5-diulose 6-phosphate + L-aspartate 4-semialdehyde = 2,3-dioxopropyl phosphate + 2-amino-2,3,7-trideoxy-D-lyxo-hept-6-ulosonate. In terms of biological role, catalyzes a transaldol reaction between 6-deoxy-5-ketofructose 1-phosphate (DKFP) and L-aspartate semialdehyde (ASA) with an elimination of hydroxypyruvaldehyde phosphate to yield 2-amino-3,7-dideoxy-D-threo-hept-6-ulosonate (ADH). Plays a key role in an alternative pathway of the biosynthesis of 3-dehydroquinate (DHQ), which is involved in the canonical pathway for the biosynthesis of aromatic amino acids. This chain is 2-amino-3,7-dideoxy-D-threo-hept-6-ulosonate synthase, found in Halobacterium salinarum (strain ATCC 700922 / JCM 11081 / NRC-1) (Halobacterium halobium).